Here is a 282-residue protein sequence, read N- to C-terminus: Thiazole synthase (282 aa).

The active-site Schiff-base intermediate with DXP is the Lys113. 1-deoxy-D-xylulose 5-phosphate-binding positions include Gly174, 201–202, and 223–224; these read AG and NT.

This sequence belongs to the ThiG family. As to quaternary structure, homotetramer. Forms heterodimers with either ThiH or ThiS.

It localises to the cytoplasm. It carries out the reaction [ThiS sulfur-carrier protein]-C-terminal-Gly-aminoethanethioate + 2-iminoacetate + 1-deoxy-D-xylulose 5-phosphate = [ThiS sulfur-carrier protein]-C-terminal Gly-Gly + 2-[(2R,5Z)-2-carboxy-4-methylthiazol-5(2H)-ylidene]ethyl phosphate + 2 H2O + H(+). The protein operates within cofactor biosynthesis; thiamine diphosphate biosynthesis. Catalyzes the rearrangement of 1-deoxy-D-xylulose 5-phosphate (DXP) to produce the thiazole phosphate moiety of thiamine. Sulfur is provided by the thiocarboxylate moiety of the carrier protein ThiS. In vitro, sulfur can be provided by H(2)S. The sequence is that of Thiazole synthase from Cupriavidus metallidurans (strain ATCC 43123 / DSM 2839 / NBRC 102507 / CH34) (Ralstonia metallidurans).